The chain runs to 281 residues: Lectin alpha chain (281 aa).

3 N-linked (GlcNAc...) asparagine glycosylation sites follow: asparagine 35, asparagine 82, and asparagine 140.

It belongs to the leguminous lectin family. In terms of assembly, tetramer of 2 alpha and 2 beta chains. Glycosylated. Post-translationally, the beta chain is produced by partial proteolytic processing of the alpha chain.

Functionally, D-galactose-binding lectin. The sequence is that of Lectin alpha chain from Lablab purpureus (Hyacinth bean).